We begin with the raw amino-acid sequence, 78 residues long: Large ribosomal subunit protein bL28 (78 aa).

This sequence belongs to the bacterial ribosomal protein bL28 family.

The chain is Large ribosomal subunit protein bL28 from Ruthia magnifica subsp. Calyptogena magnifica.